The sequence spans 317 residues: Tyrosine--tRNA ligase (317 aa).

Tyr-32 contacts L-tyrosine. A 'HIGH' region motif is present at residues 37–45 (PSGEIHLGH). L-tyrosine-binding residues include Tyr-152, Gln-156, Asp-159, and Gln-174. The 'KMSKS' region signature appears at 208–212 (KMSSS). Ser-211 contacts ATP.

It belongs to the class-I aminoacyl-tRNA synthetase family. TyrS type 3 subfamily. As to quaternary structure, homodimer.

The protein localises to the cytoplasm. It carries out the reaction tRNA(Tyr) + L-tyrosine + ATP = L-tyrosyl-tRNA(Tyr) + AMP + diphosphate + H(+). Functionally, catalyzes the attachment of tyrosine to tRNA(Tyr) in a two-step reaction: tyrosine is first activated by ATP to form Tyr-AMP and then transferred to the acceptor end of tRNA(Tyr). In Methanocorpusculum labreanum (strain ATCC 43576 / DSM 4855 / Z), this protein is Tyrosine--tRNA ligase.